A 223-amino-acid chain; its full sequence is Deoxyribose-phosphate aldolase (223 aa).

Aspartate 91 (proton donor/acceptor) is an active-site residue. Residue lysine 153 is the Schiff-base intermediate with acetaldehyde of the active site. The active-site Proton donor/acceptor is lysine 183.

It belongs to the DeoC/FbaB aldolase family. DeoC type 1 subfamily.

Its subcellular location is the cytoplasm. It carries out the reaction 2-deoxy-D-ribose 5-phosphate = D-glyceraldehyde 3-phosphate + acetaldehyde. It participates in carbohydrate degradation; 2-deoxy-D-ribose 1-phosphate degradation; D-glyceraldehyde 3-phosphate and acetaldehyde from 2-deoxy-alpha-D-ribose 1-phosphate: step 2/2. Its function is as follows. Catalyzes a reversible aldol reaction between acetaldehyde and D-glyceraldehyde 3-phosphate to generate 2-deoxy-D-ribose 5-phosphate. This chain is Deoxyribose-phosphate aldolase, found in Mycoplasmopsis synoviae (strain 53) (Mycoplasma synoviae).